The chain runs to 75 residues: Cytoplasmic envelopment protein 3 (75 aa).

Gly-2 carries N-myristoyl glycine; by host lipidation. Over residues 53–65 (EGLEYDEDSENDE) the composition is skewed to acidic residues. The interval 53–75 (EGLEYDEDSENDELLFLPNKKPN) is disordered.

This sequence belongs to the herpesviridae cytoplasmic envelopment protein 3 family. Interacts with BGLF2; this interaction is essential for the proper localization of each protein to the assembly complex and thus for the production of infectious virus. Myristoylation and palmitoylation (probably on one or more of the nearby cysteines at the N-terminus) enable membrane-binding and Golgi apparatus-specific targeting and are essential for efficient packaging. In terms of processing, phosphorylated. Phosphorylation does not seem to be required for recycling to the host Golgi apparatus. Packaging is selective for underphosphorylated forms.

The protein localises to the virion tegument. It localises to the virion membrane. It is found in the host cell membrane. The protein resides in the host Golgi apparatus membrane. Plays an important role in the cytoplasmic envelopment of tegument proteins and capsids during the assembly and egress processes. Also participates in viral entry at the fusion step probably by regulating the core fusion machinery. In Homo sapiens (Human), this protein is Cytoplasmic envelopment protein 3.